A 493-amino-acid chain; its full sequence is Glycerol kinase (493 aa).

ADP is bound at residue threonine 11. ATP is bound by residues threonine 11, threonine 12, and serine 13. Sn-glycerol 3-phosphate is bound at residue threonine 11. Arginine 15 serves as a coordination point for ADP. 4 residues coordinate sn-glycerol 3-phosphate: arginine 80, glutamate 81, tyrosine 132, and aspartate 241. The glycerol site is built by arginine 80, glutamate 81, tyrosine 132, aspartate 241, and glutamine 242. The ADP site is built by threonine 263 and glycine 306. Threonine 263, glycine 306, glutamine 310, and glycine 408 together coordinate ATP. Glycine 408 is an ADP binding site.

Belongs to the FGGY kinase family.

It catalyses the reaction glycerol + ATP = sn-glycerol 3-phosphate + ADP + H(+). The protein operates within polyol metabolism; glycerol degradation via glycerol kinase pathway; sn-glycerol 3-phosphate from glycerol: step 1/1. Inhibited by fructose 1,6-bisphosphate (FBP). Its function is as follows. Key enzyme in the regulation of glycerol uptake and metabolism. Catalyzes the phosphorylation of glycerol to yield sn-glycerol 3-phosphate. The protein is Glycerol kinase of Cereibacter sphaeroides (strain ATCC 17025 / ATH 2.4.3) (Rhodobacter sphaeroides).